Here is a 474-residue protein sequence, read N- to C-terminus: Glutamate--tRNA ligase (474 aa).

The 'HIGH' region motif lies at 9–19 (PSPTGFLHVGG). The 'KMSKS' region motif lies at 240–244 (KLSKR). Residue Lys243 coordinates ATP.

The protein belongs to the class-I aminoacyl-tRNA synthetase family. Glutamate--tRNA ligase type 1 subfamily. Monomer.

It is found in the cytoplasm. The enzyme catalyses tRNA(Glu) + L-glutamate + ATP = L-glutamyl-tRNA(Glu) + AMP + diphosphate. Its function is as follows. Catalyzes the attachment of glutamate to tRNA(Glu) in a two-step reaction: glutamate is first activated by ATP to form Glu-AMP and then transferred to the acceptor end of tRNA(Glu). This chain is Glutamate--tRNA ligase, found in Photobacterium profundum (strain SS9).